The following is a 631-amino-acid chain: MTHEFTENYDVIVIGAGHAGVEASLATSRMGCKTLLATINLEMLAFMPCNPSIGGSAKGIVVREIDALGGEMGKNIDKSYIQMRMLNTGKGPAVRALRAQADKALYARNMKHTVEQQENLTLRQSMIDEILVEDGKVIGVRTATNQKYSAQAVIVTTGTALRGEIILGELKYSSGPNNSLASVTLADNLRDLGLEIGRFKTGTPPRVKANSIHYDETEIQPGDKKANHFSFMSKDEDYLKDQIPCWLTYTNQSSHDIINKNLYRAPMFSGIVKGVGPRYCPSIEDKIVRFADKDRHQLFLEPEGRETEEVYIQGLSTSLPEDVQKDVVHSIKGLENAEMMRTGYAIEYDIVLPHQLRATLETKKISGLFTAGQTNGTSGYEEAAGQGIVAGINAALKIQGKPELILKRSDAYIGVMIDDLVTKGTLEPYRLLTSRAEYRLILRHDNADLRLTEIGHQVGLVNEERYMRFQIRKNQFDNELTRLSSIKLKPVAEINKRIEELGFKPLTDALTAKEFMRRPEINYAIATSFVGPAAESLDEKVIELLETEIKYEGYINKALDQVAKMKRMEEKRIPKNIDWDAIDSIATEARQKFKKINPETIGQASRISGVNPADISILMVYLEGKNRSRTR.

FAD is bound by residues 15-20, Ile-127, and Ser-182; that span reads GAGHAG. Residue 276-290 participates in NAD(+) binding; the sequence is GPRYCPSIEDKIVRF. Gln-373 lines the FAD pocket.

It belongs to the MnmG family. Homodimer. Heterotetramer of two MnmE and two MnmG subunits. Requires FAD as cofactor.

Its subcellular location is the cytoplasm. Functionally, NAD-binding protein involved in the addition of a carboxymethylaminomethyl (cmnm) group at the wobble position (U34) of certain tRNAs, forming tRNA-cmnm(5)s(2)U34. This chain is tRNA uridine 5-carboxymethylaminomethyl modification enzyme MnmG, found in Streptococcus mutans serotype c (strain ATCC 700610 / UA159).